Consider the following 158-residue polypeptide: Cytochrome c-type biogenesis protein CcmE (158 aa).

The Cytoplasmic segment spans residues 1–7; it reads MKPRHRR. Residues 8–28 traverse the membrane as a helical; Signal-anchor for type II membrane protein segment; sequence LTLIALVLGGLGLSAGLALTA. Residues 29–158 lie on the Periplasmic side of the membrane; the sequence is FQDNLVFFFT…DGHPETTTAY (130 aa). Heme-binding residues include histidine 123 and tyrosine 127. Positions 138–158 are disordered; that stretch reads RIGQGNGTPGPDGHPETTTAY.

The protein belongs to the CcmE/CycJ family.

Its subcellular location is the cell inner membrane. Its function is as follows. Heme chaperone required for the biogenesis of c-type cytochromes. Transiently binds heme delivered by CcmC and transfers the heme to apo-cytochromes in a process facilitated by CcmF and CcmH. The protein is Cytochrome c-type biogenesis protein CcmE of Alkalilimnicola ehrlichii (strain ATCC BAA-1101 / DSM 17681 / MLHE-1).